A 196-amino-acid chain; its full sequence is Probable nicotinate-nucleotide adenylyltransferase (196 aa).

This sequence belongs to the NadD family.

The enzyme catalyses nicotinate beta-D-ribonucleotide + ATP + H(+) = deamido-NAD(+) + diphosphate. It participates in cofactor biosynthesis; NAD(+) biosynthesis; deamido-NAD(+) from nicotinate D-ribonucleotide: step 1/1. Functionally, catalyzes the reversible adenylation of nicotinate mononucleotide (NaMN) to nicotinic acid adenine dinucleotide (NaAD). The protein is Probable nicotinate-nucleotide adenylyltransferase of Caldicellulosiruptor bescii (strain ATCC BAA-1888 / DSM 6725 / KCTC 15123 / Z-1320) (Anaerocellum thermophilum).